We begin with the raw amino-acid sequence, 115 residues long: U31-theraphotoxin-Cg1a (115 aa).

An N-terminal signal peptide occupies residues 1-18; that stretch reads MKLCVIIIASLMVASVSG. Positions 19-51 are excised as a propeptide; sequence RLRKIKGTELDKKMLLEKLGHGMDIRFEETPRA. 4 disulfides stabilise this stretch: cysteine 52–cysteine 67, cysteine 60–cysteine 73, cysteine 64–cysteine 113, and cysteine 66–cysteine 86.

This sequence belongs to the neurotoxin 03 (Tx2) family. 02 subfamily. As to expression, expressed by the venom gland.

It is found in the secreted. In terms of biological role, probable ion channel inhibitor. The chain is U31-theraphotoxin-Cg1a from Chilobrachys guangxiensis (Chinese earth tiger tarantula).